Consider the following 414-residue polypeptide: Putative competence-damage inducible protein (414 aa).

The protein belongs to the CinA family.

The sequence is that of Putative competence-damage inducible protein from Geobacillus kaustophilus (strain HTA426).